The sequence spans 117 residues: uncharacterized protein (117 aa).

Positions 1–20 (MAAVHLYIISFTALMISSTS) are cleaved as a signal peptide.

This is an uncharacterized protein from Saccharomyces cerevisiae (strain ATCC 204508 / S288c) (Baker's yeast).